A 346-amino-acid polypeptide reads, in one-letter code: Protein STAR1 (346 aa).

The interval 23–48 is disordered; sequence QRPPPNGTVHACSKSRPPQLEPGKVG. One can recognise an ABC transporter domain in the interval 112 to 344; it reads IRVRGLTRRS…KHPMARRFLE (233 aa). 146 to 153 lines the ATP pocket; that stretch reads GPSGSGKS.

The protein belongs to the ABC transporter superfamily. ABCI family. As to quaternary structure, interacts with STAR2. In terms of tissue distribution, expressed in roots.

Its subcellular location is the membrane. Functionally, associates with STAR2 to form a functional transmembrane ABC transporter required for detoxification of aluminum (Al) in roots. Can specifically transport UDP-glucose. In Oryza sativa subsp. japonica (Rice), this protein is Protein STAR1.